A 162-amino-acid polypeptide reads, in one-letter code: NAD(P)H-quinone oxidoreductase subunit N (162 aa).

The protein belongs to the complex I NdhN subunit family. NDH-1 can be composed of about 15 different subunits; different subcomplexes with different compositions have been identified which probably have different functions.

It localises to the cellular thylakoid membrane. The catalysed reaction is a plastoquinone + NADH + (n+1) H(+)(in) = a plastoquinol + NAD(+) + n H(+)(out). It carries out the reaction a plastoquinone + NADPH + (n+1) H(+)(in) = a plastoquinol + NADP(+) + n H(+)(out). NDH-1 shuttles electrons from an unknown electron donor, via FMN and iron-sulfur (Fe-S) centers, to quinones in the respiratory and/or the photosynthetic chain. The immediate electron acceptor for the enzyme in this species is believed to be plastoquinone. Couples the redox reaction to proton translocation, and thus conserves the redox energy in a proton gradient. Cyanobacterial NDH-1 also plays a role in inorganic carbon-concentration. The polypeptide is NAD(P)H-quinone oxidoreductase subunit N (Trichormus variabilis (strain ATCC 29413 / PCC 7937) (Anabaena variabilis)).